Here is a 150-residue protein sequence, read N- to C-terminus: NmrA-like family domain-containing protein 1 (150 aa).

NADP(+) is bound by residues 7 to 12 (GATGAQ), 33 to 37 (RNPEQ), and lysine 71.

This sequence belongs to the NmrA-type oxidoreductase family. As to quaternary structure, homodimer. Interacts with ASS1. Interaction is enhanced by low NADPH/NADP(+) ratios, which results in inhibition of ASS1 activity.

Its subcellular location is the cytoplasm. It is found in the perinuclear region. The protein resides in the nucleus. Redox sensor protein. Undergoes restructuring and subcellular redistribution in response to changes in intracellular NADPH/NADP(+) levels. At low NADPH concentrations the protein is found mainly as a monomer, and binds argininosuccinate synthase (ASS1), the enzyme involved in nitric oxide synthesis. Association with ASS1 impairs its activity and reduces the production of nitric oxide, which subsecuently prevents apoptosis. Under normal NADPH concentrations, the protein is found as a dimer and hides the binding site for ASS1. The homodimer binds one molecule of NADPH. Has higher affinity for NADPH than for NADP(+). Binding to NADPH is necessary to form a stable dimer. The chain is NmrA-like family domain-containing protein 1 from Rattus norvegicus (Rat).